The following is a 67-amino-acid chain: Large ribosomal subunit protein bL35 (67 aa).

This sequence belongs to the bacterial ribosomal protein bL35 family.

In Bartonella henselae (strain ATCC 49882 / DSM 28221 / CCUG 30454 / Houston 1) (Rochalimaea henselae), this protein is Large ribosomal subunit protein bL35.